The primary structure comprises 215 residues: LexA repressor (215 aa).

Residues 28-48 (RAEIAAELGFSSPNAAEEHLR) constitute a DNA-binding region (H-T-H motif). Residues S133 and K170 each act as for autocatalytic cleavage activity in the active site.

The protein belongs to the peptidase S24 family. In terms of assembly, homodimer.

It catalyses the reaction Hydrolysis of Ala-|-Gly bond in repressor LexA.. Represses a number of genes involved in the response to DNA damage (SOS response), including recA and lexA. In the presence of single-stranded DNA, RecA interacts with LexA causing an autocatalytic cleavage which disrupts the DNA-binding part of LexA, leading to derepression of the SOS regulon and eventually DNA repair. The chain is LexA repressor from Burkholderia cenocepacia (strain ATCC BAA-245 / DSM 16553 / LMG 16656 / NCTC 13227 / J2315 / CF5610) (Burkholderia cepacia (strain J2315)).